A 424-amino-acid chain; its full sequence is Histidine--tRNA ligase (424 aa).

The protein belongs to the class-II aminoacyl-tRNA synthetase family. In terms of assembly, homodimer.

The protein resides in the cytoplasm. The catalysed reaction is tRNA(His) + L-histidine + ATP = L-histidyl-tRNA(His) + AMP + diphosphate + H(+). This chain is Histidine--tRNA ligase, found in Salmonella paratyphi A (strain ATCC 9150 / SARB42).